We begin with the raw amino-acid sequence, 625 residues long: Mesothelin (625 aa).

The first 35 residues, 1–35 (MALPTARPLLGSCGSPICSRSFLLLLLSLGWIPRL), serve as a signal peptide directing secretion. Asn93 is a glycosylation site (N-linked (GlcNAc...) asparagine). Ser202 bears the Phosphoserine mark. A disulfide bridge links Cys304 with Cys328. N-linked (GlcNAc...) asparagine glycans are attached at residues Asn390, Asn488, and Asn517. Ser600 carries the GPI-anchor amidated serine lipid modification. The propeptide at 601–625 (SRASLLGPGFVLIWIPALLPALRLS) is removed in mature form.

It belongs to the mesothelin family. In terms of assembly, interacts with MUC16. Post-translationally, proteolytically cleaved by a furin-like convertase to generate megakaryocyte-potentiating factor (MPF), and the cleaved form of mesothelin. Highly expressed in lung and heart. Expressed at low levels in spleen, liver, kidney and testis. Present in lung (at protein level).

The protein resides in the cell membrane. Its subcellular location is the golgi apparatus. It localises to the secreted. Functionally, membrane-anchored forms may play a role in cellular adhesion. Megakaryocyte-potentiating factor (MPF) may potentiate megakaryocyte colony formation. The protein is Mesothelin (Msln) of Mus musculus (Mouse).